We begin with the raw amino-acid sequence, 378 residues long: Stimulator of interferon genes protein (378 aa).

Residues methionine 1–arginine 17 are Cytoplasmic-facing. The tract at residues methionine 1–leucine 189 is mediates interaction with ZDHHC1 and ZDHHC11. The helical transmembrane segment at serine 18–tryptophan 34 threads the bilayer. Lysine 19 participates in a covalent cross-link: Glycyl lysine isopeptide (Lys-Gly) (interchain with G-Cter in ubiquitin). Over valine 35–leucine 44 the chain is Lumenal. Residues lysine 45–glutamate 69 form a helical membrane-spanning segment. The Cytoplasmic portion of the chain corresponds to leucine 70–cysteine 91. S-palmitoyl cysteine attachment occurs at residues cysteine 88 and cysteine 91. A helical transmembrane segment spans residues proline 92–tyrosine 106. The Lumenal segment spans residues phenylalanine 107–tyrosine 115. Residues leucine 116–leucine 133 traverse the membrane as a helical segment. Residues glycine 134 to isoleucine 378 lie on the Cytoplasmic side of the membrane. Residue lysine 150 forms a Glycyl lysine isopeptide (Lys-Gly) (interchain with G-Cter in ubiquitin) linkage. The tract at residues leucine 152–glutamate 339 is cyclic dinucleotide-binding domain (CBD). 3',3'-c-di-GMP is bound at residue glycine 165. A 2',3'-cUAMP-binding site is contributed by tyrosine 166. Residue tyrosine 166 participates in 3',3'-cGAMP binding. Residue lysine 235 forms a Glycyl lysine isopeptide (Lys-Gly) (interchain with G-Cter in ubiquitin) linkage. Position 237 (arginine 237) interacts with 2',3'-cUAMP. Arginine 237 contributes to the 3',3'-cGAMP binding site. Arginine 237 provides a ligand contact to 2',3'-cGAMP. 3',3'-c-di-GMP-binding positions include arginine 237–serine 240 and threonine 262. Position 240 is a phosphoserine (serine 240). Threonine 262 contacts 2',3'-cUAMP. Threonine 262 contributes to the 2',3'-cGAMP binding site. Lysine 337 is covalently cross-linked (Glycyl lysine isopeptide (Lys-Gly) (interchain with G-Cter in SUMO)). The segment at glutamate 339–isoleucine 378 is C-terminal tail (CTT). Serine 354 carries the post-translational modification Phosphoserine; by MAP3K7. Phosphoserine; by TBK1 is present on residues serine 357 and serine 365. The pLxIS motif signature appears at leucine 362–serine 365.

It belongs to the STING family. As to quaternary structure, homodimer; forms a homodimer in absence of cyclic nucleotide (c-di-GMP or cGAMP); 'Lys-63'-linked ubiquitination at Lys-150 is required for homodimerization. Homotetramer; in presence of cyclic nucleotide (c-di-GMP or cGAMP), forms tetramers and higher-order oligomers through side-by-side packing. Interacts (when phosphorylated) with IRF3; following activation and phosphorylation on the pLxIS motif by TBK1, recruits IRF3. Interacts with RIGI, MAVS and SSR2. Interacts with RNF5 and TRIM56. Interacts with TBK1; when homodimer, leading to subsequent production of IFN-beta. Interacts with IFIT1 and IFIT2. Interacts with TRIM29; this interaction induces STING1 ubiquitination and subsequent degradation. Associates with the MHC-II complex. Interacts with STEEP1; interaction takes place upon cGAMP-activation and STING1 phosphorylation by MAP3K7/TAK1 and promotes STING1 translocation to COPII vesicles. Interacts with SEC24A, SEC24B and SEC24C; promoting translocation to COPII vesicles. Interacts (when ubiquitinated) with SQSTM1; leading to relocalization to autophagosomes. Interacts with SURF4. Interacts with HNRNPA2B1. Interacts with ZDHHC1; ZDHHC1 constitutively interacts with STING1 and in presence of DNA viruses activates it by promoting its cGAMP-induced oligomerization and the recruitment of downstream signaling components. Interacts with ZDHHC11; in presence of DNA viruses promotes the recruitment of IRF3 to STING1. Interacts with TOMM70. Interacts with IFI204. Interacts with TAB1; promoting recruitment of TAB1 to the endoplasmic reticulum membrane and subsequent activation of MAP3K7/TAK1. Interacts (via transmembrane domain) with TMEM203. Interacts with DDX41. Post-translationally, phosphorylation by TBK1 leads to activation and production of IFN-beta. Following cyclic nucleotide (c-di-GMP or cGAMP)-binding, activation and translocation from the endoplasmic reticulum, STING1 is phosphorylated by TBK1 at Ser-365 in the pLxIS motif. The phosphorylated pLxIS motif constitutes an IRF3-binding motif, leading to recruitment of the transcription factor IRF3 to induce type-I interferons and other cytokines. The phosphorylated pLxIS motif facilitates SENP2 recruitment during late phase of viral infection. Phosphorylated on tyrosine residues upon MHC-II aggregation. Dephosphorylation by PPP6C leads to inactivation and decreased production of IFN-beta. Phosphorylation at Ser-357 is also required to activate IRF3. Phosphorylation at Ser-354 by MAP3K7/TAK1 facilitates its interaction with STEEP1, promoting STING1 translocation to COPII vesicles. In terms of processing, ubiquitinated. Ubiquitinated via 'Lys-63'-linked ubiquitin chains in response to double-stranded DNA treatment, leading to relocalization to autophagosomes and subsequent degradation; this process is dependent on SQSTM1. 'Lys-63'-linked ubiquitination mediated by TRIM56 at Lys-150 promotes homodimerization and recruitment of the antiviral kinase TBK1 and subsequent production of IFN-beta. 'Lys-48'-linked polyubiquitination at Lys-150 occurring after viral infection is mediated by RNF5 and leads to proteasomal degradation. 'Lys-11'-linked polyubiquitination at Lys-150 by RNF26 leads to stabilize STING1: it protects STING1 from RNF5-mediated 'Lys-48'-linked polyubiquitination. 'Lys-33'-linked and 'Lys-48'-linked deubiquitinated by USP20; leading to its stabilization and promotion of innate antiviral response. 'Lys-48'-linked deubiquitinated by USP44; leading to its stabilization and promotion of innate antiviral response. Deubiquitinated by USP13; leading to inhibition of innate antiviral response. 'Lys-63'-linked deubiquitinated by USP49; leading to inhibition of the subsequent recruitment of TBK1 to the signaling complex. 'Lys-63'-linked ubiquitination mediated by RNF39 promotes the activation of the cGAS-STING pathway. MARCHF5-mediated ubiquitination prevents the oxidation-induced polymer formation. Sumoylated at Lys-337 by TRIM38 during the early phase of viral infection, promoting its stability by preventing its relocalization to autophagosomes and subsequent degradation. Desumoylated by SENP2 during the late phase of viral infection. Post-translationally, palmitoylation takes place in the Golgi apparatus and creates a platform for the recruitment of TBK1. Present in spleen and thymus tissue. Also present in dendritic cells (at protein level).

It localises to the endoplasmic reticulum membrane. Its subcellular location is the cytoplasm. It is found in the perinuclear region. The protein localises to the endoplasmic reticulum-Golgi intermediate compartment membrane. The protein resides in the golgi apparatus membrane. It localises to the cytoplasmic vesicle. Its subcellular location is the autophagosome membrane. It is found in the mitochondrion outer membrane. The protein localises to the cell membrane. The protein resides in the lysosome membrane. It carries out the reaction H(+)(in) = H(+)(out). With respect to regulation, activated by anticancer drug 5,6-dimethylxanthenone 4-acetic acid (DMXAA). Specifically inhibited by nitrofuran derivatives C-178 and C-176, which covalently bind Cys-91 and prevent palmitoylation and subsequent activation od STING1. In terms of biological role, facilitator of innate immune signaling that acts as a sensor of cytosolic DNA from bacteria and viruses and promotes the production of type I interferon (IFN-alpha and IFN-beta). Innate immune response is triggered in response to non-CpG double-stranded DNA from viruses and bacteria delivered to the cytoplasm. Acts by binding cyclic dinucleotides: recognizes and binds cyclic di-GMP (c-di-GMP), a second messenger produced by bacteria, cyclic UMP-AMP (2',3'-cUAMP), and cyclic GMP-AMP (cGAMP), a messenger produced by CGAS in response to DNA virus in the cytosol. Upon binding to c-di-GMP, cUAMP or cGAMP, STING1 oligomerizes, translocates from the endoplasmic reticulum and is phosphorylated by TBK1 on the pLxIS motif, leading to recruitment and subsequent activation of the transcription factor IRF3 to induce expression of type I interferon and exert a potent anti-viral state. Exhibits 2',3' phosphodiester linkage-specific ligand recognition: can bind both 2'-3' linked cGAMP (2'-3'-cGAMP) and 3'-3' linked cGAMP but is preferentially activated by 2'-3' linked cGAMP. The preference for 2'-3'-cGAMP, compared to other linkage isomers is probably due to the ligand itself, whichs adopts an organized free-ligand conformation that resembles the STING1-bound conformation and pays low energy costs in changing into the active conformation. In addition to promote the production of type I interferons, plays a direct role in autophagy. Following cGAMP-binding, STING1 buds from the endoplasmic reticulum into COPII vesicles, which then form the endoplasmic reticulum-Golgi intermediate compartment (ERGIC). The ERGIC serves as the membrane source for WIPI2 recruitment and LC3 lipidation, leading to formation of autophagosomes that target cytosolic DNA or DNA viruses for degradation by the lysosome. Promotes autophagy by acting as a proton channel that directs proton efflux from the Golgi to facilitate MAP1LC3B/LC3B lipidation. The autophagy- and interferon-inducing activities can be uncoupled and autophagy induction is independent of TBK1 phosphorylation. Autophagy is also triggered upon infection by bacteria: following c-di-GMP-binding, which is produced by live Gram-positive bacteria, promotes reticulophagy. May be involved in translocon function, the translocon possibly being able to influence the induction of type I interferons. May be involved in transduction of apoptotic signals via its association with the major histocompatibility complex class II (MHC-II). This Mus musculus (Mouse) protein is Stimulator of interferon genes protein.